A 243-amino-acid polypeptide reads, in one-letter code: Undecaprenyl-phosphate mannosyltransferase (243 aa).

Belongs to the glycosyltransferase 2 family.

It catalyses the reaction di-trans,octa-cis-undecaprenyl phosphate + GDP-alpha-D-mannose = D-mannosyl di-trans,octa-cis-undecaprenyl phosphate + GDP. Functionally, catalyzes the transfer of mannose from GDP-mannose to D-mannosyl-1-phosphoundecaprenol. This is Undecaprenyl-phosphate mannosyltransferase from Micrococcus luteus (strain ATCC 4698 / DSM 20030 / JCM 1464 / CCM 169 / CCUG 5858 / IAM 1056 / NBRC 3333 / NCIMB 9278 / NCTC 2665 / VKM Ac-2230) (Micrococcus lysodeikticus).